A 382-amino-acid chain; its full sequence is uncharacterized protein (382 aa).

The next 12 membrane-spanning stretches (helical) occupy residues 8–28 (VMLL…LNTL), 45–65 (MVSS…GYLI), 75–95 (YLAS…VGFW), 102–122 (FIAG…LMCS), 131–151 (LLAA…LLVS), 157–177 (LLHV…PLLF), 204–224 (LGVN…GLMP), 231–251 (GMAN…GILG), 270–290 (VQVF…AMAP), 291–311 (ALFI…AWAC), 325–345 (ALLL…AMLM), and 349–369 (SDNL…LMLL).

It belongs to the major facilitator superfamily. YcaD (TC 2.A.1.26) family.

It localises to the cell inner membrane. This is an uncharacterized protein from Salmonella paratyphi B (strain ATCC BAA-1250 / SPB7).